A 502-amino-acid polypeptide reads, in one-letter code: Glycerol kinase (502 aa).

An ADP-binding site is contributed by Thr-14. Residues Thr-14, Thr-15, and Ser-16 each coordinate ATP. Thr-14 provides a ligand contact to sn-glycerol 3-phosphate. Arg-18 is an ADP binding site. Arg-84, Glu-85, Tyr-136, and Asp-246 together coordinate sn-glycerol 3-phosphate. Residues Arg-84, Glu-85, Tyr-136, Asp-246, and Gln-247 each coordinate glycerol. Positions 268 and 311 each coordinate ADP. The ATP site is built by Thr-268, Gly-311, Gln-315, and Gly-412. Gly-412 and Asn-416 together coordinate ADP.

This sequence belongs to the FGGY kinase family. In terms of assembly, homotetramer and homodimer (in equilibrium). Heterodimer with EIIA-Glc. Binds 1 zinc ion per glycerol kinase EIIA-Glc dimer. The zinc ion is important for dimerization.

The catalysed reaction is glycerol + ATP = sn-glycerol 3-phosphate + ADP + H(+). The protein operates within polyol metabolism; glycerol degradation via glycerol kinase pathway; sn-glycerol 3-phosphate from glycerol: step 1/1. With respect to regulation, activity of this regulatory enzyme is affected by several metabolites. Allosterically and non-competitively inhibited by fructose 1,6-bisphosphate (FBP) and unphosphorylated phosphocarrier protein EIIA-Glc (III-Glc), an integral component of the bacterial phosphotransferase (PTS) system. Key enzyme in the regulation of glycerol uptake and metabolism. Catalyzes the phosphorylation of glycerol to yield sn-glycerol 3-phosphate. This chain is Glycerol kinase, found in Escherichia coli O7:K1 (strain IAI39 / ExPEC).